The following is a 177-amino-acid chain: Protein YOP1 (177 aa).

The Cytoplasmic segment spans residues methionine 1–proline 35. A helical transmembrane segment spans residues lysine 36–valine 55. The Lumenal portion of the chain corresponds to glycine 56–glycine 57. A helical transmembrane segment spans residues isoleucine 58–alanine 78. Over leucine 79–threonine 88 the chain is Cytoplasmic. A helical membrane pass occupies residues glutamine 89–isoleucine 103. Over glutamate 104 to lysine 108 the chain is Lumenal. The chain crosses the membrane as a helical span at residues alanine 109 to tyrosine 127. Residues isoleucine 128–histidine 177 are Cytoplasmic-facing.

This sequence belongs to the DP1 family. In terms of assembly, oligomer.

The protein resides in the endoplasmic reticulum membrane. Its subcellular location is the golgi apparatus membrane. Required to generate and maintain the structure of the tubular endoplasmic reticulum network and the vacuole. Induces high curvature in membranes and causes membrane tubule formation. Involved in membrane/vesicle trafficking. In Candida glabrata (strain ATCC 2001 / BCRC 20586 / JCM 3761 / NBRC 0622 / NRRL Y-65 / CBS 138) (Yeast), this protein is Protein YOP1 (YOP1).